The chain runs to 612 residues: MSKVIGIDLGTTNSCVAVLEGGEPKVIPNPEGARTTPSVVAFKNGERQVGEVAKRQSITNPNTIMSIKRHMGTDYTVEIEGKKYTPQEVSAIILQHLKSYAESYLGETVSKAVITVPAYFNDAERQATKDAGKIAGLEVERIINEPTAAALAYGLDKTEEDQTILVYDLGGGTFDVSILELGDGVFEVRSTAGDNRLGGDDFDQVIIDHLVSEFKKENGIDLSKDKMALQRLKDAAEKAKKDLSGVSSTQISLPFITAGEAGPLHLELTLTRAKFEELSSHLVERTMGPVRQALQDAGLSASEIDKVILVGGSTRIPAVQEAIKKETGKEAHKGVNPDEVVALGAAIQGGVITGDVKDVVLLDVTPLSLGIETMGGVFTKLIERNTTIPTSKSQVFSTAADNQTAVDIHVLQGERPMAADNKTLGRFQLTDIPPAPRGVPQIEVSFDIDKNGIVNVSAKDLGTGKEQNITIKSSSGLSDDEIERMVKEAEENAEADAKKKEEIELRNEADQLVFTTEKTLKDLEGKADEAQVKKANEAKDALKAAIEKNDLDEIKAKKDELQAIVQELSMKLYEEAAKQAQAQQDGGAGAKKADDNVVDAEYEEVNDDKDQK.

Position 173 is a phosphothreonine; by autocatalysis (T173). Residues 576–612 (AAKQAQAQQDGGAGAKKADDNVVDAEYEEVNDDKDQK) are disordered. Residues 596 to 612 (NVVDAEYEEVNDDKDQK) show a composition bias toward acidic residues.

It belongs to the heat shock protein 70 family.

Functionally, acts as a chaperone. This chain is Chaperone protein DnaK, found in Bacillus licheniformis (strain ATCC 14580 / DSM 13 / JCM 2505 / CCUG 7422 / NBRC 12200 / NCIMB 9375 / NCTC 10341 / NRRL NRS-1264 / Gibson 46).